The following is a 1231-amino-acid chain: MSSVLSEYTIGGVKILFPCRAYPSQLAMMNSIMRGLNCKQHCLLESPTGSGKSLALLCSALAWQQSLYGKQLVDEKSDEKEWKKMERVTPCCCSCHLKNSDQTTFSSDRQMNSTDNAPSNISGASSNKTTLASKLCAKKQASFTTDQDDDFQTDRKRIRQSHDEQLQARKRRCYEKGVQFIDDDDDDDRDHVKFDSYNQRRASMDSCAEEAIAASSNHSAGPCSLCFCGQTKEEDKATEKCKKENGEKPKVPKIFFGTRTHKQIAQITRELRRTAYSSVRMTILSSREHTCVHPDIHSNRNERCKELLEAKDGHSCRFYHGVHKMNEQSLLQYRHGIDKAWDIEELVGLGKRLRACAYFAARELMQGADIVFCPYNYLLDSQIRESMEICLENQVVILDEAHNIEDCARESASFSCSDEQLMYARDEIDSMVNHGIRVSDHEPLRAVCYSLTNWIRQCSDQLVEREYEASCKVWNGKEILSIFHDMGITNATFPLLKVNLAAVVEKEEKITMFHGQENVIKIPTLSPQSQMVLKGLFLVLDYLFRQNNRFAEDYRVALQQSYTWTNRPDIPDENGFFARPRSRRSIRQKIMVYTLNFWCLNPAVAFSDLSSNARTIVLTSGTLSPMGSFSSELGVKFSIQLEANHVIHKSQVWVGTVGAGPKGRKLCATFQHTETFDFQDEIGALLLSVCQTVSHGILCFLPSYKMLEKLKDRWMHTGLWENLERIKTVIKEPQGGDKTDFDKLLQMYYDAIRYKGEKDGALLIAVCRGKVSEGLDFSDNNARAVVTVGIPFPNIKDLQVELKRKYNDQHAKNRGLLPGSQWYEIQAYRALNQALGRCIRHKNDWGALILVDDRFRSNPKYITGLSKWVRQLVQHHSTFNGALESLTEFSKNQQQRMQMSSTNCDDEPSQGTSSSSKNTSPTSSLLEFTVHPTQSVSEFTQPTSSTQSSVTSPPEIAIPFSPIQASLGGTAPRDNAEVLSHWKEEQRRKSNTSIKTNLMKSFEKSKSNYSKQRTSFYNYFKSNAHTSTPRQSSSKTRESNLEICCNELASGYSASANSGSLSQGFGRENNVSRKQDEGLNESCQEILCNAVPLFHCTNKETHASVSPPRKYVEPSVSMLPEDNTDTDITIHCTPELYDDDGQENLVSDEEDKCNEEKENKIDSGRADKDTNACALDTSVKRENLFHKEEYLNVSGNENAFNIGRNKGTEQKNRENRLSRSRNKGVSSFFLD.

The region spanning G11–C448 is the Helicase ATP-binding domain. S46–S53 contacts ATP. 2 disordered regions span residues T104–S126 and Q147–L166. Residues Q152 to L166 show a composition bias toward basic and acidic residues. The Nuclear localization signal motif lies at R155–C173. [4Fe-4S] cluster is bound by residues C291, C304, C316, and C356. A DEAH box motif is present at residues D399–H402. Positions S890–N903 are enriched in polar residues. 3 disordered regions span residues S890–S924, V936–I956, and G1195–D1231. Low complexity-rich tracts occupy residues S909 to S924 and T940 to P954. The segment covering K1206 to L1217 has biased composition (basic and acidic residues).

It belongs to the DEAD box helicase family. DEAH subfamily. [4Fe-4S] cluster serves as cofactor.

The protein localises to the nucleus. It carries out the reaction Couples ATP hydrolysis with the unwinding of duplex DNA at the replication fork by translocating in the 5'-3' direction. This creates two antiparallel DNA single strands (ssDNA). The leading ssDNA polymer is the template for DNA polymerase III holoenzyme which synthesizes a continuous strand.. It catalyses the reaction ATP + H2O = ADP + phosphate + H(+). In terms of biological role, DNA-dependent helicase and 5' to 3' DNA helicase required for the maintenance of chromosomal stability. Involved in the repair of DNA double-strand breaks by homologous recombination. Involved in the repair of abasic sites at replication forks by promoting the degradation of DNA-protein cross-links: acts by catalyzing unfolding of HMCES DNA-protein cross-link via its helicase activity, exposing the underlying DNA and enabling cleavage of the DNA-protein adduct by the SPRTN metalloprotease. This Xenopus laevis (African clawed frog) protein is Fanconi anemia group J protein homolog (brip1.L).